The chain runs to 544 residues: Propane 2-monooxygenase, hydroxylase component large subunit (544 aa).

Fe cation is bound by residues Glu97, Glu127, His130, Glu192, Glu226, and His229.

Belongs to the TmoA/XamoA family. In terms of assembly, the propane 2-monooxygenase multicomponent enzyme system is composed of an electron transfer component and a monooxygenase component interacting with the effector protein PrmD. The electron transfer component is composed of a reductase (PrmB), and the monooxygenase component is formed by a large subunit (PrmA) and a small subunit (PrmC). Probably requires the presence of the chaperonin-like protein PrmG to ensure a productive folding, resulting of a soluble PrmA, which leads to the active form of PrmABCD. Fe(2+) is required as a cofactor.

The catalysed reaction is propane + NADH + O2 + H(+) = propan-2-ol + NAD(+) + H2O. Its function is as follows. Component of the propane 2-monooxygenase multicomponent enzyme system which is involved in the degradation of propane via the O2-dependent hydroxylation of propane. Also able to catalyze the oxidation the water contaminant N-nitrosodimethylamine (NDMA). This Rhodococcus jostii (strain RHA1) protein is Propane 2-monooxygenase, hydroxylase component large subunit.